A 145-amino-acid polypeptide reads, in one-letter code: D-aminoacyl-tRNA deacylase (145 aa).

Residues 137 to 138 (GP) carry the Gly-cisPro motif, important for rejection of L-amino acids motif.

This sequence belongs to the DTD family. In terms of assembly, homodimer.

Its subcellular location is the cytoplasm. The enzyme catalyses glycyl-tRNA(Ala) + H2O = tRNA(Ala) + glycine + H(+). It catalyses the reaction a D-aminoacyl-tRNA + H2O = a tRNA + a D-alpha-amino acid + H(+). In terms of biological role, an aminoacyl-tRNA editing enzyme that deacylates mischarged D-aminoacyl-tRNAs. Also deacylates mischarged glycyl-tRNA(Ala), protecting cells against glycine mischarging by AlaRS. Acts via tRNA-based rather than protein-based catalysis; rejects L-amino acids rather than detecting D-amino acids in the active site. By recycling D-aminoacyl-tRNA to D-amino acids and free tRNA molecules, this enzyme counteracts the toxicity associated with the formation of D-aminoacyl-tRNA entities in vivo and helps enforce protein L-homochirality. The polypeptide is D-aminoacyl-tRNA deacylase (Pectobacterium carotovorum subsp. carotovorum (strain PC1)).